The primary structure comprises 347 residues: UDP-N-acetylenolpyruvoylglucosamine reductase (347 aa).

The FAD-binding PCMH-type domain occupies 27 to 197 (LPARAQRLAR…TGIELRLNKM (171 aa)). Residue Arg173 is part of the active site. Ser247 acts as the Proton donor in catalysis. Glu342 is a catalytic residue.

This sequence belongs to the MurB family. The cofactor is FAD.

Its subcellular location is the cytoplasm. It carries out the reaction UDP-N-acetyl-alpha-D-muramate + NADP(+) = UDP-N-acetyl-3-O-(1-carboxyvinyl)-alpha-D-glucosamine + NADPH + H(+). It participates in cell wall biogenesis; peptidoglycan biosynthesis. Functionally, cell wall formation. This is UDP-N-acetylenolpyruvoylglucosamine reductase from Alcanivorax borkumensis (strain ATCC 700651 / DSM 11573 / NCIMB 13689 / SK2).